The sequence spans 72 residues: SRY-related protein AES4 (72 aa).

Residues 1–69 (VKRPMNAFMV…KHMADYPDYK (69 aa)) constitute a DNA-binding region (HMG box).

It is found in the nucleus. The polypeptide is SRY-related protein AES4 (Alligator mississippiensis (American alligator)).